Here is a 228-residue protein sequence, read N- to C-terminus: Ribonuclease S-1 (228 aa).

Residues methionine 1–glycine 27 form the signal peptide. Glutamine 36 serves as a coordination point for RNA. Cysteine 42 and cysteine 49 are joined by a disulfide. RNA is bound at residue histidine 60. The Proton donor role is filled by histidine 60. A disulfide bond links cysteine 75 and cysteine 119. Asparagine 87 is a glycosylation site (N-linked (GlcNAc...) asparagine). Asparagine 98–valine 99 is a binding site for RNA. Residue asparagine 101 is glycosylated (N-linked (GlcNAc...) asparagine). Residues phenylalanine 108, lysine 111 to glutamate 112, and lysine 115 to histidine 116 each bind RNA. Glutamate 112 is a catalytic residue. Histidine 116 (proton acceptor) is an active-site residue. Residues asparagine 144, asparagine 157, and asparagine 175 are each glycosylated (N-linked (GlcNAc...) asparagine). 2 disulfide bridges follow: cysteine 183–cysteine 222 and cysteine 199–cysteine 210.

Belongs to the RNase T2 family. In terms of processing, N-linked core structure at Asn-87 and Asn-101 contains xylose and fucose or consists of disaccharide (GlcNAc-GlcNAc). N-linked core structure at Asn-144 contains xylose.

It catalyses the reaction a ribonucleotidyl-ribonucleotide-RNA + H2O = a 3'-end 3'-phospho-ribonucleotide-RNA + a 5'-end dephospho-ribonucleoside-RNA + H(+). Self-incompatibility (SI) is the inherited ability of a flowering plant to prevent self-fertilization by discriminating between self and non-self pollen during pollination. In many species, self-incompatibility is controlled by the single, multiallelic locus S. The sequence is that of Ribonuclease S-1 from Pyrus pyrifolia (Chinese pear).